The following is a 274-amino-acid chain: Phosphatidylglycerol--prolipoprotein diacylglyceryl transferase (274 aa).

The next 4 helical transmembrane spans lie at valine 19–leucine 39, leucine 59–glutamine 79, isoleucine 93–isoleucine 113, and valine 120–glycine 140. Residue arginine 141 coordinates a 1,2-diacyl-sn-glycero-3-phospho-(1'-sn-glycerol). 3 helical membrane passes run threonine 181 to phenylalanine 201, glycine 209 to leucine 229, and glutamine 243 to leucine 263.

The protein belongs to the Lgt family.

The protein resides in the cell inner membrane. It carries out the reaction L-cysteinyl-[prolipoprotein] + a 1,2-diacyl-sn-glycero-3-phospho-(1'-sn-glycerol) = an S-1,2-diacyl-sn-glyceryl-L-cysteinyl-[prolipoprotein] + sn-glycerol 1-phosphate + H(+). Its pathway is protein modification; lipoprotein biosynthesis (diacylglyceryl transfer). Its function is as follows. Catalyzes the transfer of the diacylglyceryl group from phosphatidylglycerol to the sulfhydryl group of the N-terminal cysteine of a prolipoprotein, the first step in the formation of mature lipoproteins. The protein is Phosphatidylglycerol--prolipoprotein diacylglyceryl transferase of Acaryochloris marina (strain MBIC 11017).